The following is a 173-amino-acid chain: Ribosome maturation factor RimM (173 aa).

The PRC barrel domain occupies 95–169 (DPDEFYDHQL…VIEIDPPEGL (75 aa)).

The protein belongs to the RimM family. As to quaternary structure, binds ribosomal protein uS19.

It localises to the cytoplasm. In terms of biological role, an accessory protein needed during the final step in the assembly of 30S ribosomal subunit, possibly for assembly of the head region. Essential for efficient processing of 16S rRNA. May be needed both before and after RbfA during the maturation of 16S rRNA. It has affinity for free ribosomal 30S subunits but not for 70S ribosomes. This chain is Ribosome maturation factor RimM, found in Mycobacteroides abscessus (strain ATCC 19977 / DSM 44196 / CCUG 20993 / CIP 104536 / JCM 13569 / NCTC 13031 / TMC 1543 / L948) (Mycobacterium abscessus).